The following is a 1031-amino-acid chain: Toll-like receptor 9 (1031 aa).

A signal peptide spans 1–25 (MGPCHGALQPLSLLVQAAMLAVALA). At 26–817 (QGTLPPFLPC…LCLDESLSWD (792 aa)) the chain is on the extracellular side. Cysteines 35 and 45 form a disulfide. 47 to 51 (WLFLK) contacts DNA. LRR repeat units follow at residues 62–85 (RDNV…DFAQ), 87–110 (SNLQ…HFPC), 122–147 (VPTL…SLVS), 150–166 (LSRT…LTGL), 167–190 (HALR…ALEV), 198–221 (LGNL…LPPS), 223–242 (EYLL…DLAN), 243–268 (LTAL…CVEC), 283–306 (LSRL…WFRG), 308–332 (GNLT…AFQG), 333–356 (LAQL…HLTL), 363–386 (LLSL…TLQP), 390–413 (LPML…IFKD), 414–438 (FPGL…ATTG), 470–494 (CKNL…MFAQ), 496–519 (SRLQ…QFVP), 520–543 (LTSL…SFTE), 545–567 (PRLE…VGHN), 574–598 (LPTL…LCST), 600–622 (LWAL…LYLR), 627–650 (LRSL…TLGN), 652–675 (PKSL…SLTL), 676–699 (LPNL…SLPS), 701–723 (TQLQ…FFAL), 724–747 (ATRL…WFGF), and 749–772 (AGSL…AFVD). N-linked (GlcNAc...) asparagine glycosylation occurs at N64. DNA is bound by residues 72–77 (SNRIHH) and 95–109 (KWNC…MHFP). C98 and C110 are joined by a disulfide. N-linked (GlcNAc...) asparagine glycosylation occurs at N129. DNA contacts are provided by residues Y132, R152, and 179-181 (YYK). The cysteines at positions 178 and 184 are disulfide-linked. The N-linked (GlcNAc...) asparagine glycan is linked to N200. Position 208 (Y208) interacts with DNA. N-linked (GlcNAc...) asparagine glycans are attached at residues N210 and N242. Disulfide bonds link C255–C268 and C258–C265. Residue C258 is the site of S-palmitoyl cysteine attachment. R262 lines the DNA pocket. C265 carries the S-palmitoyl cysteine lipid modification. N-linked (GlcNAc...) asparagine glycosylation is found at N309 and N340. Cysteines 470 and 500 form a disulfide. 2 N-linked (GlcNAc...) asparagine glycosylation sites follow: N472 and N513. The N-linked (GlcNAc...) asparagine glycan is linked to N567. Residues N669 and N694 are each glycosylated (N-linked (GlcNAc...) asparagine). N731 carries N-linked (GlcNAc...) asparagine glycosylation. Intrachain disulfides connect C764/C790 and C766/C809. Residues 818–838 (CFGLSLLVVALGLAMPMLHHL) traverse the membrane as a helical segment. The Cytoplasmic portion of the chain corresponds to 839–1031 (CGWDLWYCFH…NFCRGPTMAE (193 aa)). The 146-residue stretch at 866–1011 (LSYDAFVVFD…SFWAQLGMAL (146 aa)) folds into the TIR domain.

The protein belongs to the Toll-like receptor family. As to quaternary structure, monomer and homodimer. Exists as a monomer in the absence of unmethylated cytidine-phosphate-guanosine (CpG) ligand. Proteolytic processing of an insertion loop (Z-loop) is required for homodimerization upon binding to the unmethylated CpG ligand leading to its activation. Interacts with MYD88 via their respective TIR domains. Interacts with BTK. Interacts (via transmembrane domain) with UNC93B1. Interacts with CD300LH; the interaction may promote full activation of TLR9-triggered innate responses. Interacts with CNPY3 and HSP90B1; this interaction is required for proper folding in the endoplasmic reticulum. Interacts with SMPDL3B. Interacts with CD82; this interaction is essential for TLR9-dependent myddosome formation in response to CpG stimulation. Post-translationally, activated by proteolytic cleavage of the flexible loop between repeats LRR14 and LRR15 within the ectodomain. Cleavage requires UNC93B1. Proteolytically processed by first removing the majority of the ectodomain by either asparagine endopeptidase (AEP) or a cathepsin followed by a trimming event that is solely cathepsin mediated and required for optimal receptor signaling. Palmitoylated by ZDHHC3 in the Golgi regulates TLR9 trafficking from the Golgi to endosomes. Depalmitoylation by PPT1 controls the release of TLR9 from UNC93B1 in endosomes. As to expression, expressed in airway epithelium, vascular endothelium and inflammatory cells in blood vessels of the lungs (at protein level). Highly expressed in pulmonary intravascular macrophages (PIMs) and to a lesser extent in alveolar macrophages, neutrophiles, type-II alveolar epithelial cells and bronchial epithelial cells of the lungs (at protein level). High constitutive intracellular expression in leukocytes including polymorphonuclear leukocytes (PMNs), CD4 and CD8 T cells (at protein level). Expressed throughout the respiratory tract including larynx, upper, middle and lower trachea, and bronchus in isolated equine respiratory epithelial cells (ERECs) and in fully differentiated ERECs cultured at the air-fluid interface (AFI) (at protein level). Constitutively expressed in peripheral blood mononuclear cells (PBMCs), lymph nodes and spleen. The level of expression in PBMCs is about 2- to 3-fold higher than that in lymph nodes and spleen. Very low expression in liver, heart, lung, kidney, small intestine, colon and stomach. Low expression in the airway tissue epithelium of the larynx, upper trachea, middle tranchea, lower trachea, bronchus and spleen, and more abundant expression in mesenteric lymph node. Not expressed in fully differentiated bronchus epithelial cells cultured at the AFI for four weeks. Expressed in gingival tissue.

The protein localises to the endoplasmic reticulum membrane. The protein resides in the endosome. Its subcellular location is the lysosome. It is found in the cytoplasmic vesicle. It localises to the phagosome. The protein localises to the cell membrane. The protein resides in the cytoplasm. Its subcellular location is the nucleus. Its function is as follows. Key component of innate and adaptive immunity. TLRs (Toll-like receptors) control host immune response against pathogens through recognition of molecular patterns specific to microorganisms. TLR9 is a nucleotide-sensing TLR which is activated by unmethylated cytidine-phosphate-guanosine (CpG) dinucleotides. Acts via MYD88 and TRAF6, leading to NF-kappa-B activation, cytokine secretion and the inflammatory response. Upon CpG stimulation, induces B-cell proliferation, activation, survival and antibody production. This is Toll-like receptor 9 from Equus caballus (Horse).